The sequence spans 257 residues: Imidazole glycerol phosphate synthase subunit HisF (257 aa).

Residues aspartate 11 and aspartate 130 contribute to the active site.

It belongs to the HisA/HisF family. In terms of assembly, heterodimer of HisH and HisF.

It is found in the cytoplasm. It catalyses the reaction 5-[(5-phospho-1-deoxy-D-ribulos-1-ylimino)methylamino]-1-(5-phospho-beta-D-ribosyl)imidazole-4-carboxamide + L-glutamine = D-erythro-1-(imidazol-4-yl)glycerol 3-phosphate + 5-amino-1-(5-phospho-beta-D-ribosyl)imidazole-4-carboxamide + L-glutamate + H(+). Its pathway is amino-acid biosynthesis; L-histidine biosynthesis; L-histidine from 5-phospho-alpha-D-ribose 1-diphosphate: step 5/9. Functionally, IGPS catalyzes the conversion of PRFAR and glutamine to IGP, AICAR and glutamate. The HisF subunit catalyzes the cyclization activity that produces IGP and AICAR from PRFAR using the ammonia provided by the HisH subunit. This Afipia carboxidovorans (strain ATCC 49405 / DSM 1227 / KCTC 32145 / OM5) (Oligotropha carboxidovorans) protein is Imidazole glycerol phosphate synthase subunit HisF.